The sequence spans 296 residues: Putative fatty acid elongase DDB_G0272012 (296 aa).

Helical transmembrane passes span 51–71 (FQIL…IKFL), 83–103 (VSIL…VGIL), 134–154 (WSYI…IIVL), 159–179 (LIFL…YFMY), 184–204 (LQLW…YFYF), 220–240 (MIQI…SAAI), and 253–273 (AFIS…QFFV). The segment covering 277–290 (SNKPTSSSSTTTPT) has biased composition (low complexity). The disordered stretch occupies residues 277-296 (SNKPTSSSSTTTPTKTKKID).

This sequence belongs to the ELO family.

Its subcellular location is the membrane. The catalysed reaction is a very-long-chain acyl-CoA + malonyl-CoA + H(+) = a very-long-chain 3-oxoacyl-CoA + CO2 + CoA. Its function is as follows. Could be implicated in synthesis of very long chain fatty acids. The protein is Putative fatty acid elongase DDB_G0272012 of Dictyostelium discoideum (Social amoeba).